Consider the following 417-residue polypeptide: Serine hydroxymethyltransferase (417 aa).

Residues leucine 112 and 116 to 118 contribute to the (6S)-5,6,7,8-tetrahydrofolate site; that span reads GHL. Lysine 221 bears the N6-(pyridoxal phosphate)lysine mark. Position 247 (glutamate 247) interacts with (6S)-5,6,7,8-tetrahydrofolate.

The protein belongs to the SHMT family. As to quaternary structure, homodimer. Pyridoxal 5'-phosphate is required as a cofactor.

It localises to the cytoplasm. The enzyme catalyses (6R)-5,10-methylene-5,6,7,8-tetrahydrofolate + glycine + H2O = (6S)-5,6,7,8-tetrahydrofolate + L-serine. It participates in one-carbon metabolism; tetrahydrofolate interconversion. Its pathway is amino-acid biosynthesis; glycine biosynthesis; glycine from L-serine: step 1/1. Catalyzes the reversible interconversion of serine and glycine with tetrahydrofolate (THF) serving as the one-carbon carrier. This reaction serves as the major source of one-carbon groups required for the biosynthesis of purines, thymidylate, methionine, and other important biomolecules. Also exhibits THF-independent aldolase activity toward beta-hydroxyamino acids, producing glycine and aldehydes, via a retro-aldol mechanism. This is Serine hydroxymethyltransferase from Borrelia recurrentis (strain A1).